Reading from the N-terminus, the 322-residue chain is Phospholipase A1 (322 aa).

A signal peptide spans 1–18 (MNFKYSILFICFGTLDRG). An intrachain disulfide couples cysteine 23 to cysteine 106. Serine 156 functions as the Nucleophile in the catalytic mechanism. Residue aspartate 184 is the Charge relay system of the active site. 2 disulfides stabilise this stretch: cysteine 195–cysteine 200 and cysteine 238–cysteine 246. Histidine 248 functions as the Charge relay system in the catalytic mechanism. 3 cysteine pairs are disulfide-bonded: cysteine 263–cysteine 290, cysteine 264–cysteine 315, and cysteine 283–cysteine 288.

The protein belongs to the AB hydrolase superfamily. Lipase family. Post-translationally, contains six disulfide bonds. Is not glycosylated. As to expression, expressed by the venom gland.

Its subcellular location is the secreted. It carries out the reaction a 1,2-diacyl-sn-glycero-3-phosphocholine + H2O = a 2-acyl-sn-glycero-3-phosphocholine + a fatty acid + H(+). Its function is as follows. Catalyzes the hydrolysis of phosphatidylcholine with phospholipase A1 activity. Shows hemolytic activity. Acts as an allergen. The chain is Phospholipase A1 from Polybia paulista (Neotropical social wasp).